A 126-amino-acid polypeptide reads, in one-letter code: Aspartate 1-decarboxylase (126 aa).

The active-site Schiff-base intermediate with substrate; via pyruvic acid is the serine 25. The residue at position 25 (serine 25) is a Pyruvic acid (Ser). Threonine 57 serves as a coordination point for substrate. Tyrosine 58 serves as the catalytic Proton donor. A substrate-binding site is contributed by 73 to 75 (GGA).

Belongs to the PanD family. As to quaternary structure, heterooctamer of four alpha and four beta subunits. The cofactor is pyruvate. In terms of processing, is synthesized initially as an inactive proenzyme, which is activated by self-cleavage at a specific serine bond to produce a beta-subunit with a hydroxyl group at its C-terminus and an alpha-subunit with a pyruvoyl group at its N-terminus.

The protein resides in the cytoplasm. It carries out the reaction L-aspartate + H(+) = beta-alanine + CO2. It participates in cofactor biosynthesis; (R)-pantothenate biosynthesis; beta-alanine from L-aspartate: step 1/1. Functionally, catalyzes the pyruvoyl-dependent decarboxylation of aspartate to produce beta-alanine. In Xanthomonas oryzae pv. oryzae (strain MAFF 311018), this protein is Aspartate 1-decarboxylase.